A 455-amino-acid polypeptide reads, in one-letter code: Serine--tRNA ligase (455 aa).

252 to 254 (TAE) serves as a coordination point for L-serine. ATP is bound by residues 283–285 (RKE) and V299. E306 serves as a coordination point for L-serine. 370–373 (EVVS) is a binding site for ATP. T406 is a binding site for L-serine.

The protein belongs to the class-II aminoacyl-tRNA synthetase family. Type-1 seryl-tRNA synthetase subfamily. In terms of assembly, homodimer. The tRNA molecule binds across the dimer.

The protein localises to the cytoplasm. It catalyses the reaction tRNA(Ser) + L-serine + ATP = L-seryl-tRNA(Ser) + AMP + diphosphate + H(+). The enzyme catalyses tRNA(Sec) + L-serine + ATP = L-seryl-tRNA(Sec) + AMP + diphosphate + H(+). Its pathway is aminoacyl-tRNA biosynthesis; selenocysteinyl-tRNA(Sec) biosynthesis; L-seryl-tRNA(Sec) from L-serine and tRNA(Sec): step 1/1. Catalyzes the attachment of serine to tRNA(Ser). Is also able to aminoacylate tRNA(Sec) with serine, to form the misacylated tRNA L-seryl-tRNA(Sec), which will be further converted into selenocysteinyl-tRNA(Sec). The polypeptide is Serine--tRNA ligase (Pyrococcus furiosus (strain ATCC 43587 / DSM 3638 / JCM 8422 / Vc1)).